The primary structure comprises 235 residues: DUP240 protein DFP4 (235 aa).

Residues 1 to 44 (MSSELLISNSKPRPEGLRKLCEGETVILPRDITPSKCAYFLKQN) are Cytoplasmic-facing. The chain crosses the membrane as a helical span at residues 45–65 (IVFISYIFIHIIITIILNRLA). Topologically, residues 66 to 72 (LSAHGNT) are extracellular. A helical membrane pass occupies residues 73 to 93 (LIIILAALLITISLFLLLLLP). Topologically, residues 94–235 (YLSCSRYKLR…DKYPEMGVTV (142 aa)) are cytoplasmic.

The protein belongs to the DUP/COS family. As to quaternary structure, interacts according to large scale protein interaction studies with BZZ1, SRB4 and SUA7.

It is found in the cell membrane. This chain is DUP240 protein DFP4, found in Saccharomyces cerevisiae (strain ATCC 204508 / S288c) (Baker's yeast).